A 154-amino-acid polypeptide reads, in one-letter code: 17 kDa surface antigen (154 aa).

Residues 1–19 (MKLLSKIMIIALAASMLQA) form the signal peptide. A lipid anchor (N-palmitoyl cysteine) is attached at cysteine 20. Residue cysteine 20 is the site of S-diacylglycerol cysteine attachment.

It belongs to the rickettsiale 17 kDa surface antigen family.

Its subcellular location is the cell outer membrane. This chain is 17 kDa surface antigen (omp), found in Rickettsia rhipicephali.